The chain runs to 173 residues: Protein tyrosine phosphatase type IVA 3 (173 aa).

The region spanning 8–161 (APVEVSYRHM…YRPKQRLRFK (154 aa)) is the Tyrosine-protein phosphatase domain. Cysteine 49 and cysteine 104 are disulfide-bonded. Residue aspartate 72 is the Proton donor of the active site. The active-site Phosphocysteine intermediate is the cysteine 104. Substrate is bound at residue arginine 110. Cysteine 170 carries the cysteine methyl ester modification. A lipid anchor (S-farnesyl cysteine) is attached at cysteine 170. A propeptide spans 171–173 (CVM) (removed in mature form).

The protein belongs to the protein-tyrosine phosphatase family. In terms of assembly, interacts with tubulin. Post-translationally, farnesylated. Farnesylation is required for membrane targeting. Unfarnesylated forms are shifted into the nucleus. In terms of tissue distribution, present in the small intestine, where it is located in the differentiated epithelial cells of the villus but not in the proliferating crypt cells (at protein level). Expressed in heart and skeletal muscle, and at lower levels in lung, spleen and testis.

The protein resides in the cell membrane. It is found in the early endosome. It carries out the reaction O-phospho-L-tyrosyl-[protein] + H2O = L-tyrosyl-[protein] + phosphate. With respect to regulation, inhibited by sodium orthovanadate and peroxovanadium compounds, and by pentamidine. Its function is as follows. Protein tyrosine phosphatase which stimulates progression from G1 into S phase during mitosis. Enhances cell proliferation, cell motility and invasive activity, and promotes cancer metastasis. May be involved in the progression of cardiac hypertrophy by inhibiting intracellular calcium mobilization in response to angiotensin II. In Mus musculus (Mouse), this protein is Protein tyrosine phosphatase type IVA 3 (Ptp4a3).